A 112-amino-acid chain; its full sequence is uncharacterized protein (112 aa).

This is an uncharacterized protein from Acanthamoeba polyphaga mimivirus (APMV).